Consider the following 269-residue polypeptide: Phosphate import ATP-binding protein PstB (269 aa).

Residues 23–264 (IATRNLEFYY…PSKQQTEDYI (242 aa)) enclose the ABC transporter domain. Position 55–62 (55–62 (GPSGCGKS)) interacts with ATP.

Belongs to the ABC transporter superfamily. Phosphate importer (TC 3.A.1.7) family. In terms of assembly, the complex is composed of two ATP-binding proteins (PstB), two transmembrane proteins (PstC and PstA) and a solute-binding protein (PstS).

Its subcellular location is the cell inner membrane. It catalyses the reaction phosphate(out) + ATP + H2O = ADP + 2 phosphate(in) + H(+). Part of the ABC transporter complex PstSACB involved in phosphate import. Responsible for energy coupling to the transport system. The chain is Phosphate import ATP-binding protein PstB from Xylella fastidiosa (strain Temecula1 / ATCC 700964).